The following is a 116-amino-acid chain: Ribosome-binding factor A (116 aa).

The protein belongs to the RbfA family. In terms of assembly, monomer. Binds 30S ribosomal subunits, but not 50S ribosomal subunits or 70S ribosomes.

It localises to the cytoplasm. One of several proteins that assist in the late maturation steps of the functional core of the 30S ribosomal subunit. Associates with free 30S ribosomal subunits (but not with 30S subunits that are part of 70S ribosomes or polysomes). Required for efficient processing of 16S rRNA. May interact with the 5'-terminal helix region of 16S rRNA. The protein is Ribosome-binding factor A of Streptococcus pneumoniae (strain ATCC 700669 / Spain 23F-1).